Reading from the N-terminus, the 297-residue chain is Phosphatidylinositol N-acetylglucosaminyltransferase subunit C (297 aa).

A run of 4 helical transmembrane segments spans residues 67–87 (VFVV…WLFG), 88–108 (TGLA…GGDG), 153–173 (AVFM…AAIV), and 239–259 (AFGG…LLLF).

Belongs to the PIGC family. As to quaternary structure, component of the glycosylphosphatidylinositol-N-acetylglucosaminyltransferase (GPI-GnT) complex composed at least by PIGA, PIGC, PIGH, PIGP, PIGQ, PIGY and DPM2. Interacts with PIGQ. Interacts with the heterodimer PIGA:PIGH.

The protein localises to the endoplasmic reticulum membrane. The protein operates within glycolipid biosynthesis; glycosylphosphatidylinositol-anchor biosynthesis. Functionally, part of the glycosylphosphatidylinositol-N-acetylglucosaminyltransferase (GPI-GnT) complex that catalyzes the transfer of N-acetylglucosamine from UDP-N-acetylglucosamine to phosphatidylinositol and participates in the first step of GPI biosynthesis. In Mus musculus (Mouse), this protein is Phosphatidylinositol N-acetylglucosaminyltransferase subunit C.